The primary structure comprises 169 residues: uncharacterized protein (169 aa).

The HD domain maps to 18–130; the sequence is VVEHCLAVSE…VAHADNLIFG (113 aa).

This is an uncharacterized protein from Methanocaldococcus jannaschii (strain ATCC 43067 / DSM 2661 / JAL-1 / JCM 10045 / NBRC 100440) (Methanococcus jannaschii).